The chain runs to 313 residues: MAGMRIIFMGTPEFACPTLQKLLDRGEDVIAVITQPDRPKGRGQQTLPPPVKVLAERHGIPVMQPLKVRVPEVVESIRSLAPDLIVVVAFGQILPKSLLDIPKYGCINVHASLLPRWRGAAPLNWCIINGETETGVTTMMMDVGLDTGDMLVKRSTPIDPDENTQSLHDRLSVVGAEALAETLDLLTAGKLVREKQDDALTCYAPMLKKEDGLIDWSKEPQTIKNLVRGMTPWPGAFSFLDGKMLKIYRVGTAGGEGTPGSVIRAGREGLEVACSGGSIVIEELQLEGKKRLHAGDFLAGYKIAPGSILGKKD.

Ser112 to Pro115 contacts (6S)-5,6,7,8-tetrahydrofolate.

Belongs to the Fmt family.

It carries out the reaction L-methionyl-tRNA(fMet) + (6R)-10-formyltetrahydrofolate = N-formyl-L-methionyl-tRNA(fMet) + (6S)-5,6,7,8-tetrahydrofolate + H(+). Functionally, attaches a formyl group to the free amino group of methionyl-tRNA(fMet). The formyl group appears to play a dual role in the initiator identity of N-formylmethionyl-tRNA by promoting its recognition by IF2 and preventing the misappropriation of this tRNA by the elongation apparatus. This Geotalea uraniireducens (strain Rf4) (Geobacter uraniireducens) protein is Methionyl-tRNA formyltransferase.